The primary structure comprises 611 residues: BTB/POZ domain-containing protein 9 (611 aa).

The BTB domain maps to 36–104 (GDVTFVVEKK…IYTGRATLTD (69 aa)). The BACK domain maps to 142 to 240 (VCMTFDVASL…SLTELLNVVR (99 aa)). The tract at residues 560-611 (QSAQKDSSDEPGTGGASAAGQQLDPHALQAPSGSSLPSSPGSNSRSPNRQHQ) is disordered. Positions 586-611 (ALQAPSGSSLPSSPGSNSRSPNRQHQ) are enriched in low complexity.

This Bos taurus (Bovine) protein is BTB/POZ domain-containing protein 9 (BTBD9).